The primary structure comprises 425 residues: AFP homolog 2 (425 aa).

Disordered regions lie at residues 1–207 and 288–327; these read MDDD…SGTE and PFAG…DNSN. Residues 7–17 form a necessary and sufficient for the interaction with TOPLESS region; the sequence is LELSLGLSCGG. Over residues 20-34 the composition is skewed to low complexity; that stretch reads GKAKGNNNNNAGSSS. Positions 37–54 are enriched in basic and acidic residues; that stretch reads YRAEGGDRSAKVIDDFKN. Over residues 66–81 the composition is skewed to low complexity; it reads PSSGSQRSDSGQQPPQ. A compositionally biased stretch (basic and acidic residues) spans 124-140; sequence NDDKKKEKDSSHVDMHE. Polar residues-rich tracts occupy residues 146 to 158, 185 to 197, and 288 to 299; these read SHVS…GSTA, TDTN…TGQR, and PFAGRVPSNSAT. Residues 322–425 form a necessary and sufficient for the interaction with the JAZ proteins region; the sequence is TGDNSNLNTA…MGMTAASAHT (104 aa).

This sequence belongs to the Ninja family. Component of a complex at least composed of TOPLESS, TPR2, TPR3, TIFY4B/PPD2, MYC3/ATR2 and TIFY3B/JAZ12. Interacts (via C-terminus) with TIFY10A/JAZ1; TIFY10B/JAZ2; TIFY6B/JAZ3; TIFY6A/JAZ4; TIFY11A/JAZ5; TIFY11B/JAZ6; TIFY7/JAZ9; TIFY9/JAZ10; TIFY3A/JAZ11; TIFY3B/JAZ12; TIFY4A/PPD1; TIFY4B/PPD2 and TIFY8 (via TIFY domain). Interacts with TOPLESS. Interacts with PAT1H1.

Its subcellular location is the nucleus. Functionally, acts as a transcriptional repressor. Negative regulator of jasmonate responses. Connects the JAZ proteins and the non-JAZ protein TIFY8 with the TOPLESS corepressors. This chain is AFP homolog 2, found in Arabidopsis thaliana (Mouse-ear cress).